Reading from the N-terminus, the 311-residue chain is Aspartate carbamoyltransferase catalytic subunit (311 aa).

The carbamoyl phosphate site is built by Arg-55 and Thr-56. Lys-85 contributes to the L-aspartate binding site. Carbamoyl phosphate-binding residues include Arg-106, His-135, and Gln-138. 2 residues coordinate L-aspartate: Arg-168 and Arg-230. Positions 268 and 269 each coordinate carbamoyl phosphate.

This sequence belongs to the aspartate/ornithine carbamoyltransferase superfamily. ATCase family. In terms of assembly, heterododecamer (2C3:3R2) of six catalytic PyrB chains organized as two trimers (C3), and six regulatory PyrI chains organized as three dimers (R2).

It catalyses the reaction carbamoyl phosphate + L-aspartate = N-carbamoyl-L-aspartate + phosphate + H(+). The protein operates within pyrimidine metabolism; UMP biosynthesis via de novo pathway; (S)-dihydroorotate from bicarbonate: step 2/3. Its function is as follows. Catalyzes the condensation of carbamoyl phosphate and aspartate to form carbamoyl aspartate and inorganic phosphate, the committed step in the de novo pyrimidine nucleotide biosynthesis pathway. This Serratia proteamaculans (strain 568) protein is Aspartate carbamoyltransferase catalytic subunit.